A 469-amino-acid chain; its full sequence is 3-isopropylmalate dehydratase large subunit (469 aa).

3 residues coordinate [4Fe-4S] cluster: Cys350, Cys410, and Cys413.

The protein belongs to the aconitase/IPM isomerase family. LeuC type 1 subfamily. In terms of assembly, heterodimer of LeuC and LeuD. [4Fe-4S] cluster is required as a cofactor.

It carries out the reaction (2R,3S)-3-isopropylmalate = (2S)-2-isopropylmalate. The protein operates within amino-acid biosynthesis; L-leucine biosynthesis; L-leucine from 3-methyl-2-oxobutanoate: step 2/4. Its function is as follows. Catalyzes the isomerization between 2-isopropylmalate and 3-isopropylmalate, via the formation of 2-isopropylmaleate. This is 3-isopropylmalate dehydratase large subunit from Brucella abortus (strain S19).